Consider the following 125-residue polypeptide: Succinate dehydrogenase assembly factor 3, mitochondrial (125 aa).

A mitochondrion-targeting transit peptide spans Met1–Leu30.

This sequence belongs to the complex I LYR family. SDHAF3 subfamily. Interacts with Sdhb within an Sdha-Sdhb subcomplex.

It is found in the mitochondrion matrix. In terms of biological role, plays an essential role in the assembly of succinate dehydrogenase (SDH), an enzyme complex (also referred to as respiratory complex II) that is a component of both the tricarboxylic acid (TCA) cycle and the mitochondrial electron transport chain, and which couples the oxidation of succinate to fumarate with the reduction of ubiquinone (coenzyme Q) to ubiquinol. Promotes maturation of the iron-sulfur protein subunit Sdhb of the SDH catalytic dimer, protecting it from the deleterious effects of oxidants. May act together with SDHAF1. The polypeptide is Succinate dehydrogenase assembly factor 3, mitochondrial (Rattus norvegicus (Rat)).